A 303-amino-acid polypeptide reads, in one-letter code: Aspartate carbamoyltransferase catalytic subunit (303 aa).

Carbamoyl phosphate contacts are provided by arginine 49 and threonine 50. Lysine 77 is a binding site for L-aspartate. Carbamoyl phosphate-binding residues include arginine 99, histidine 126, and glutamine 129. Positions 159 and 211 each coordinate L-aspartate. Carbamoyl phosphate contacts are provided by serine 252 and proline 253.

It belongs to the aspartate/ornithine carbamoyltransferase superfamily. ATCase family. In terms of assembly, heterododecamer (2C3:3R2) of six catalytic PyrB chains organized as two trimers (C3), and six regulatory PyrI chains organized as three dimers (R2).

It catalyses the reaction carbamoyl phosphate + L-aspartate = N-carbamoyl-L-aspartate + phosphate + H(+). It functions in the pathway pyrimidine metabolism; UMP biosynthesis via de novo pathway; (S)-dihydroorotate from bicarbonate: step 2/3. Functionally, catalyzes the condensation of carbamoyl phosphate and aspartate to form carbamoyl aspartate and inorganic phosphate, the committed step in the de novo pyrimidine nucleotide biosynthesis pathway. The sequence is that of Aspartate carbamoyltransferase catalytic subunit from Listeria monocytogenes serotype 4b (strain F2365).